The primary structure comprises 509 residues: Cytochrome P450 monooxygenase hepC (509 aa).

Residues 5–25 form a helical membrane-spanning segment; the sequence is MIIPSFWTGTAIIGLVACAYV. Residue cysteine 454 participates in heme binding. Residue asparagine 491 is glycosylated (N-linked (GlcNAc...) asparagine).

Belongs to the cytochrome P450 family. Heme serves as cofactor.

The protein localises to the membrane. The protein operates within secondary metabolite biosynthesis. Cytochrome P450 monooxygenase; part of the gene cluster that mediates the biosynthesis of heptelidic acid (HA), a sesquiterpene lactone that acts as an inhibitor of glyceraldehyde-3-phosphatedehydrogenase (GAPDH) and a growth inhibitor of the salt-tolerant lactic acid bacteria in soy sauce brewing. In Aspergillus oryzae (strain ATCC 42149 / RIB 40) (Yellow koji mold), this protein is Cytochrome P450 monooxygenase hepC.